The sequence spans 180 residues: Bifunctional protein PyrR (180 aa).

Residues 101-113 (LIVVDDVLFTGRT) carry the PRPP-binding motif.

Belongs to the purine/pyrimidine phosphoribosyltransferase family. PyrR subfamily. Homodimer and homohexamer; in equilibrium.

It carries out the reaction UMP + diphosphate = 5-phospho-alpha-D-ribose 1-diphosphate + uracil. Its function is as follows. Regulates transcriptional attenuation of the pyrimidine nucleotide (pyr) operon by binding in a uridine-dependent manner to specific sites on pyr mRNA. This disrupts an antiterminator hairpin in the RNA and favors formation of a downstream transcription terminator, leading to a reduced expression of downstream genes. In terms of biological role, also displays a weak uracil phosphoribosyltransferase activity which is not physiologically significant. This chain is Bifunctional protein PyrR, found in Bacillus pumilus (strain SAFR-032).